The sequence spans 218 residues: Protein-L-isoaspartate O-methyltransferase (218 aa).

Ser-63 is a catalytic residue.

It belongs to the methyltransferase superfamily. L-isoaspartyl/D-aspartyl protein methyltransferase family.

The protein localises to the cytoplasm. It carries out the reaction [protein]-L-isoaspartate + S-adenosyl-L-methionine = [protein]-L-isoaspartate alpha-methyl ester + S-adenosyl-L-homocysteine. Its function is as follows. Catalyzes the methyl esterification of L-isoaspartyl residues in peptides and proteins that result from spontaneous decomposition of normal L-aspartyl and L-asparaginyl residues. It plays a role in the repair and/or degradation of damaged proteins. This chain is Protein-L-isoaspartate O-methyltransferase, found in Syntrophus aciditrophicus (strain SB).